The primary structure comprises 594 residues: Protein wntless (594 aa).

Residues 1 to 13 are Cytoplasmic-facing; the sequence is MSGTILENLSGRK. The helical transmembrane segment at 14–34 threads the bilayer; it reads LSILVATLLLCQVLCFLLGGL. Topologically, residues 35-239 are lumenal; the sequence is YAPLPAGHVT…AIHQNGGFTQ (205 aa). Residue Asn-58 is glycosylated (N-linked (GlcNAc...) asparagine). The helical transmembrane segment at 240-260 threads the bilayer; sequence IWLLLKTMLFPFVVGIMIWFW. Topologically, residues 261 to 270 are cytoplasmic; sequence RRVHLLQRSP. A helical transmembrane segment spans residues 271-291; it reads ALLEYMLIYLGAALTFLNLPL. Topologically, residues 292–311 are lumenal; it reads EYLSLVYEMPYMLLLSDIRQ. The chain crosses the membrane as a helical span at residues 312-332; sequence GIFYAMLLTFWLVFAGEHMLI. Topologically, residues 333 to 344 are cytoplasmic; the sequence is QDAPNKSTIRSR. Residues 345–365 form a helical membrane-spanning segment; the sequence is YWKHLSAVVVGCISLFVFDIC. At 366 to 390 the chain is on the lumenal side; that stretch reads ERGVQLRNPFYSIWTTPLGAKVAMT. A helical membrane pass occupies residues 391–411; the sequence is FIVLAGVSAAIYFLFLCYMIW. Residues 412–473 lie on the Cytoplasmic side of the membrane; that stretch reads KVFRNIGDKR…ANESKGLIYR (62 aa). Residues 474–494 traverse the membrane as a helical segment; sequence FKFLMLATLVCAALTVAGFIM. Topologically, residues 495–514 are lumenal; sequence GQMAEGQWDWNDNVAIQPTS. Residues 515-535 form a helical membrane-spanning segment; the sequence is AFLTGVYGMWNIYIFALLILY. The Cytoplasmic segment spans residues 536–594; it reads APSHKQWPTMHHSDETTQSNENIVASAASEEIEFSHLPSDSNPSEISSLTSFTRKVAFD. A disordered region spans residues 571–594; the sequence is HLPSDSNPSEISSLTSFTRKVAFD. Polar residues predominate over residues 573–588; it reads PSDSNPSEISSLTSFT.

Belongs to the wntless family. Interacts with wg; in the Golgi. Interacts with Vps35, a component of the retromer complex; wls stability is regulated by Vps35. In terms of tissue distribution, ubiquitously expressed in the wing imaginal disk, increased expression is observed in a stripe at the dorso-ventral boundary and other regions of the wing disk that express wg. Also expresses in the leg imaginal disk. During larval development, expression is seen in both motorneurons and muscle.

The protein resides in the presynaptic cell membrane. Its subcellular location is the postsynaptic cell membrane. It is found in the cell membrane. It localises to the endosome membrane. The protein localises to the endoplasmic reticulum membrane. The protein resides in the golgi apparatus membrane. A segment polarity gene required for wingless (wg)-dependent patterning processes, acting in both wg-sending cells and wg-target cells. In non-neuronal cells wls directs wg secretion. The wls traffic loop encompasses the Golgi, the cell surface, an endocytic compartment and a retrograde route leading back to the Golgi, and involves clathrin-mediated endocytosis and the retromer complex (a conserved protein complex consisting of Vps35 and Vps26). In neuronal cells (the larval motorneuron NMJ), the wg signal moves across the synapse via the release of wls-containing exosome-like vesicles. Postsynaptic wls is required for the trafficking of fz2 through the fz2-interacting protein Grip. The protein is Protein wntless of Drosophila melanogaster (Fruit fly).